The sequence spans 348 residues: Trace amine-associated receptor 9 (348 aa).

Over 1–33 (MVNNFSQAEAVELCYKNVNESCIKTPYSPGPRS) the chain is Extracellular. Asn4 and Asn19 each carry an N-linked (GlcNAc...) asparagine glycan. Intrachain disulfides connect Cys22–Cys186 and Cys105–Cys190. A helical membrane pass occupies residues 34–58 (ILYAVLGFGAVLAAFGNLLVMIAIL). Residues 59-68 (HFKQLHTPTN) are Cytoplasmic-facing. Residues 69–90 (FLIASLACADFLVGVTVMPFST) form a helical membrane-spanning segment. Residues 91–105 (VRSVESCWYFGDSYC) are Extracellular-facing. A helical membrane pass occupies residues 106-128 (KFHTCFDTSFCFASLFHLCCISV). Positions 112 and 113 each coordinate spermidine. The Cytoplasmic segment spans residues 129–148 (DRYIAVTDPLTYPTKFTVSV). The helical transmembrane segment at 149–170 (SGICIVLSWFFSVTYSFSIFYT) threads the bilayer. Over 171–196 (GANEEGIEELVVALTCVGGCQAPLNQ) the chain is Extracellular. The extracellular Loop 2 (ECL2) stretch occupies residues 174–187 (EEGIEELVVALTCV). Residues 197–218 (NWVLLCFLLFFIPNVAMVFIYS) traverse the membrane as a helical segment. Residues 219-256 (KIFLVAKHQARKIESTASQAQSSSESYKERVAKRERKA) lie on the Cytoplasmic side of the membrane. A helical membrane pass occupies residues 257–280 (AKTLGIAMAAFLVSWLPYLVDAVI). Residues 281–293 (DAYMNFITPPYVY) lie on the Extracellular side of the membrane. A helical membrane pass occupies residues 294–314 (EILVWCVYYNSAMNPLIYAFF). Topologically, residues 315–348 (YQWFGKAIKLIVSGKVLRTDSSTTNLFSEEVETD) are cytoplasmic.

It belongs to the G-protein coupled receptor 1 family.

It is found in the cell membrane. In terms of biological role, olfactory receptor specific for trace amines, such as N,N-dimethylcyclohexylamine (DMCHA) and beta-phenylethylamine (beta-PEA). In contrast to mouse and rat orthologs, not activated by triethylamine, cadaverine (CAD) or spermidine. Trace amine compounds are enriched in animal body fluids and act on trace amine-associated receptors (TAARs) to elicit both intraspecific and interspecific innate behaviors. Trace amine-binding causes a conformation change that triggers signaling via G(s)-class of G alpha proteins (GNAL or GNAS). In mature olfactory sensory neurons, TAAR9 is coupled with GNAL/G(olf)G alpha protein and mediates activation of adenylate cyclase activity to activate cAMP signaling and eventually transmit odorant signals to achieve membrane depolarization. In immature olfactory sensory neurons, TAAR9 is coupled with GNAS/G(s) G alpha proteins. The sequence is that of Trace amine-associated receptor 9 from Homo sapiens (Human).